Consider the following 375-residue polypeptide: Erythronate-4-phosphate dehydrogenase (375 aa).

Positions 45 and 66 each coordinate substrate. Residues aspartate 146, threonine 175, 206 to 208 (ASR), and aspartate 232 contribute to the NAD(+) site. Residue arginine 208 is part of the active site. The active site involves glutamate 237. The active-site Proton donor is the histidine 254. Glycine 257 contributes to the NAD(+) binding site. Tyrosine 258 provides a ligand contact to substrate.

Belongs to the D-isomer specific 2-hydroxyacid dehydrogenase family. PdxB subfamily. In terms of assembly, homodimer.

The protein resides in the cytoplasm. The enzyme catalyses 4-phospho-D-erythronate + NAD(+) = (R)-3-hydroxy-2-oxo-4-phosphooxybutanoate + NADH + H(+). It participates in cofactor biosynthesis; pyridoxine 5'-phosphate biosynthesis; pyridoxine 5'-phosphate from D-erythrose 4-phosphate: step 2/5. Catalyzes the oxidation of erythronate-4-phosphate to 3-hydroxy-2-oxo-4-phosphonooxybutanoate. In Proteus mirabilis (strain HI4320), this protein is Erythronate-4-phosphate dehydrogenase.